The sequence spans 236 residues: MRIFPAVDILGGRCVQLVQGKRESATAYGDPLTCARRWIDAGADALHVVNLDGAFGDSAKNADLIRGLVKETGIEIELGGGIRSVEDAARWLDTGASRIILSTFAIKEPESIRTLSQEFGSDRVMAGVDAKGGQVAIHGWQETAGDYIGWAQRFEQLGAGFLLYTNVDVEGLQGGIAAGPVRRLIGNVRIPVVVAGGVSARADVALLKESGAYGAVLGSALYSGKINLSEALEESR.

The active-site Proton acceptor is the Asp-8. The active-site Proton donor is the Asp-129.

It belongs to the HisA/HisF family.

It is found in the cytoplasm. The enzyme catalyses 1-(5-phospho-beta-D-ribosyl)-5-[(5-phospho-beta-D-ribosylamino)methylideneamino]imidazole-4-carboxamide = 5-[(5-phospho-1-deoxy-D-ribulos-1-ylimino)methylamino]-1-(5-phospho-beta-D-ribosyl)imidazole-4-carboxamide. It functions in the pathway amino-acid biosynthesis; L-histidine biosynthesis; L-histidine from 5-phospho-alpha-D-ribose 1-diphosphate: step 4/9. The protein is 1-(5-phosphoribosyl)-5-[(5-phosphoribosylamino)methylideneamino] imidazole-4-carboxamide isomerase of Methanoregula boonei (strain DSM 21154 / JCM 14090 / 6A8).